The primary structure comprises 758 residues: Dolichyl-phosphooligosaccharide-protein glycotransferase 2 (758 aa).

Residues 1-6 lie on the Cytoplasmic side of the membrane; it reads MKRRYS. A helical membrane pass occupies residues 7–27; sequence ILIILLVAIFYRMITFRFKYL. The Extracellular portion of the chain corresponds to 28–92; sequence LGYDPYFHLA…KVFGVSLTTT (65 aa). The short motif at 29–31 is the DXD motif 1 element; that stretch reads GYD. Asp-31 contributes to the Mn(2+) binding site. Residues 93–113 form a helical membrane-spanning segment; sequence FKITPVIFGVLTVIFLYLSLL. Topologically, residues 114–120 are cytoplasmic; it reads KLYDEKR. A helical transmembrane segment spans residues 121–141; it reads AFFGGFFLAISYGHVFRSMAN. The Extracellular portion of the chain corresponds to 142–145; the sequence is YYRG. Mn(2+) is bound by residues Arg-144 and Asp-146. A DXD motif 2 motif is present at residues 144–146; sequence RGD. Residues 146 to 166 form a helical membrane-spanning segment; it reads DNYMLFWYSVALLGISLALGI. At 167–175 the chain is on the cytoplasmic side; that stretch reads KKGKWKYKR. The next 2 membrane-spanning stretches (helical) occupy residues 176 to 196 and 197 to 217; these read LIFYTLPVLASGFSAIFWQAY and YPIFAFLLSNALLLAVGAFIL. The Cytoplasmic segment spans residues 218–226; that stretch reads KKDKYLLDS. Residues 227–247 form a helical membrane-spanning segment; sequence IILILSTAFGVLLANYLGGIF. Residues 248-281 are Extracellular-facing; sequence GYGMLGYAKWLGKSVAKKLGLEFGYLKDVYLILH. Residues 282-302 traverse the membrane as a helical segment; that stretch reads LKYLVPISLSFVLVLILLGFL. Residues 303-310 are Cytoplasmic-facing; sequence TKDIRIRS. The helical transmembrane segment at 311-331 threads the bilayer; it reads LFLGIASFIGIIILFKRFEAL. Residues 332-352 lie on the Extracellular side of the membrane; it reads KELSTGFGIFKEAPILETQPT. The TIXE motif motif lies at 340–343; it reads IFKE. The chain crosses the membrane as a helical span at residues 353 to 373; it reads SFKDLWAAFSLSFFLTPLFFI. Topologically, residues 374-379 are cytoplasmic; the sequence is RFKKPR. The chain crosses the membrane as a helical span at residues 380-400; the sequence is VEDFLTLGLIIPSVYMLKTWT. Residue Arg-401 is a topological domain, extracellular. Position 401 (Arg-401) interacts with a glycophospholipid. The chain crosses the membrane as a helical span at residues 402-422; that stretch reads FLFIGSMAIAIMSGIGIVELY. Residues 423-433 lie on the Cytoplasmic side of the membrane; it reads EAIKPRLNGKK. Residues 434-454 traverse the membrane as a helical segment; the sequence is ALATGIITLVILPGVIAGLSF. The Extracellular portion of the chain corresponds to 455-758; sequence KEVCSLHPEM…DRGVFRLSYN (304 aa). Residues 488–490 are interacts with target acceptor peptide in protein substrate; the sequence is WWD. The short motif at 488 to 492 is the WWDYG motif element; that stretch reads WWDWG. A DK motif motif is present at residues 540–547; it reads DFLKFGAI.

It belongs to the STT3 family. The cofactor is Mn(2+). It depends on Mg(2+) as a cofactor.

It localises to the cell membrane. It catalyses the reaction an archaeal dolichyl phosphooligosaccharide + [protein]-L-asparagine = an archaeal dolichyl phosphate + a glycoprotein with the oligosaccharide chain attached by N-beta-D-glycosyl linkage to a protein L-asparagine.. The protein operates within protein modification; protein glycosylation. Oligosaccharyl transferase (OST) that catalyzes the initial transfer of a defined glycan (ManNAcXyl(2)GlcAMan(2)GalNAc in Pyrococcus) from the lipid carrier dolichol-monophosphate to an asparagine residue within an Asn-X-Ser/Thr consensus motif in nascent polypeptide chains, the first step in protein N-glycosylation. The chain is Dolichyl-phosphooligosaccharide-protein glycotransferase 2 (aglB2) from Pyrococcus horikoshii (strain ATCC 700860 / DSM 12428 / JCM 9974 / NBRC 100139 / OT-3).